A 367-amino-acid chain; its full sequence is Apolipoprotein A-V (367 aa).

The first 20 residues, 1–20 (MVAVLTWALALLSAFATVQT), serve as a signal peptide directing secretion. Ser-56 is modified (phosphoserine). The segment at 71-90 (LGPLSGQGREPPGLPHDPEG) is disordered.

It belongs to the apolipoprotein A1/A4/E family. In terms of assembly, interacts with GPIHBP1. Interacts with SORL1; this interaction leads to APOA5 internalization and sorting either to lysosomes and degradation, or to the trans-Golgi network. Post-translationally, phosphorylated by FAM20C in the extracellular medium.

It localises to the secreted. The protein resides in the early endosome. Its subcellular location is the late endosome. The protein localises to the golgi apparatus. It is found in the trans-Golgi network. In terms of biological role, minor apolipoprotein mainly associated with HDL and to a lesser extent with VLDL. May also be associated with chylomicrons. Important determinant of plasma triglyceride (TG) levels by both being a potent stimulator of apo-CII lipoprotein lipase (LPL) TG hydrolysis and an inhibitor of the hepatic VLDL-TG production rate (without affecting the VLDL-apoB production rate). Activates poorly lecithin:cholesterol acyltransferase (LCAT) and does not enhance efflux of cholesterol from macrophages. Binds heparin. The polypeptide is Apolipoprotein A-V (APOA5) (Neomonachus schauinslandi (Hawaiian monk seal)).